The chain runs to 173 residues: Xanthine-guanine phosphoribosyltransferase (173 aa).

5-phospho-alpha-D-ribose 1-diphosphate contacts are provided by residues 48 to 49 (RG) and 107 to 115 (DDLVDTGKT). Asp-108 lines the Mg(2+) pocket. Asp-111 and Ile-154 together coordinate guanine. Residues Asp-111 and Ile-154 each coordinate xanthine. Residues 111 to 115 (DTGKT) and 153 to 154 (WI) contribute to the GMP site.

Belongs to the purine/pyrimidine phosphoribosyltransferase family. XGPT subfamily. As to quaternary structure, homotetramer. The cofactor is Mg(2+).

The protein localises to the cell inner membrane. It carries out the reaction GMP + diphosphate = guanine + 5-phospho-alpha-D-ribose 1-diphosphate. It catalyses the reaction XMP + diphosphate = xanthine + 5-phospho-alpha-D-ribose 1-diphosphate. The catalysed reaction is IMP + diphosphate = hypoxanthine + 5-phospho-alpha-D-ribose 1-diphosphate. The protein operates within purine metabolism; GMP biosynthesis via salvage pathway; GMP from guanine: step 1/1. It participates in purine metabolism; XMP biosynthesis via salvage pathway; XMP from xanthine: step 1/1. Its function is as follows. Purine salvage pathway enzyme that catalyzes the transfer of the ribosyl-5-phosphate group from 5-phospho-alpha-D-ribose 1-diphosphate (PRPP) to the N9 position of the 6-oxopurines guanine and xanthine to form the corresponding ribonucleotides GMP (guanosine 5'-monophosphate) and XMP (xanthosine 5'-monophosphate), with the release of PPi. To a lesser extent, also acts on hypoxanthine. This chain is Xanthine-guanine phosphoribosyltransferase, found in Rhodopseudomonas palustris (strain ATCC BAA-98 / CGA009).